The sequence spans 600 residues: Proline--tRNA ligase (600 aa).

This sequence belongs to the class-II aminoacyl-tRNA synthetase family. ProS type 1 subfamily. In terms of assembly, homodimer.

The protein resides in the cytoplasm. It catalyses the reaction tRNA(Pro) + L-proline + ATP = L-prolyl-tRNA(Pro) + AMP + diphosphate. In terms of biological role, catalyzes the attachment of proline to tRNA(Pro) in a two-step reaction: proline is first activated by ATP to form Pro-AMP and then transferred to the acceptor end of tRNA(Pro). As ProRS can inadvertently accommodate and process non-cognate amino acids such as alanine and cysteine, to avoid such errors it has two additional distinct editing activities against alanine. One activity is designated as 'pretransfer' editing and involves the tRNA(Pro)-independent hydrolysis of activated Ala-AMP. The other activity is designated 'posttransfer' editing and involves deacylation of mischarged Ala-tRNA(Pro). The misacylated Cys-tRNA(Pro) is not edited by ProRS. The polypeptide is Proline--tRNA ligase (Synechococcus elongatus (strain ATCC 33912 / PCC 7942 / FACHB-805) (Anacystis nidulans R2)).